The primary structure comprises 307 residues: Dioxygenase swnH1 (307 aa).

Residues His-149, Asp-151, and His-227 each coordinate Fe cation.

This sequence belongs to the PhyH family. As to quaternary structure, homodimer. Fe cation serves as cofactor.

Its pathway is mycotoxin biosynthesis. Its function is as follows. Dioxygenase; part of the gene cluster that mediates the biosynthesis of swainsonine (SW), a cytotoxic fungal alkaloid and a potential cancer therapy drug. Swainsonine production occurs via a multibranched pathway and is dispensable for fungal colonization of plants and infection of insect hosts. The first step of swainsonine biosynthesis is the production of the precursor pipecolic acid (PA) via conversion of L-lysine (Lys) to 1-piperideine-6-carboxylate (P6C) by the aminotransferase swnA, the latter being further reduced to PA by the reductase swnR. PA can be converted from lysine by both the SW biosynthetic cluster and the unclustered genes such as lysine cyclodeaminase. The PKS-NRPS hybrid synthetase swnK uptakes and condensates PA and malonyl-CoA with and without skipping of the ketoreductase (KR) domain in order to produce 3 intermediates, 1-oxoindolizidine, (1S)-1-hydroxyindolizin, and (1R)-1-hydroxyindolizine; with the transisomer (1S)-1-hydroxyindolizin being predominant. The terminal thioester reductase (TE) domain of swnK is involved in reduction of the thioester bond to release the intermediate aldehydes. The oxidoreductase swnN could contribute to the reduction of 1-oxoindolizidine to (1S)-1-hydroxyindolizin and (1R)-1-hydroxyindolizine, contributing to the major route of SW production. The dioxygenase swnH2 would be responsible for the oxidization of (1R)-1-hydroxyindolizine into (1R,2S)-1,2-dihydroxyindolizine and of (1S)-1-hydroxyindolizin to yield both (1R,2S)-1,2-dihydroxyindolizine and (1S,2S)-1,2-dihydroxyindolizine. The dioxygenase swnH1 then performs the conversion of the 1,2-dihydroxyindolizine epimers to SW. The sequence is that of Dioxygenase swnH1 from Metarhizium robertsii (strain ARSEF 23 / ATCC MYA-3075) (Metarhizium anisopliae (strain ARSEF 23)).